Consider the following 337-residue polypeptide: Pseudouridine-5'-phosphate glycosidase (337 aa).

The active-site Proton donor is the glutamate 26. Substrate contacts are provided by lysine 87 and valine 107. A Mn(2+)-binding site is contributed by aspartate 139. 141–143 (SAD) is a substrate binding site. Lysine 160 functions as the Nucleophile in the catalytic mechanism. The span at 306–325 (SSGPQAGAGAPGAEPGPARR) shows a compositional bias: low complexity. Positions 306–337 (SSGPQAGAGAPGAEPGPARRTSPARAPSGEGW) are disordered.

It belongs to the pseudouridine-5'-phosphate glycosidase family. Homotrimer. Mn(2+) serves as cofactor.

It carries out the reaction D-ribose 5-phosphate + uracil = psi-UMP + H2O. Functionally, catalyzes the reversible cleavage of pseudouridine 5'-phosphate (PsiMP) to ribose 5-phosphate and uracil. Functions biologically in the cleavage direction, as part of a pseudouridine degradation pathway. The sequence is that of Pseudouridine-5'-phosphate glycosidase from Methylobacterium nodulans (strain LMG 21967 / CNCM I-2342 / ORS 2060).